The sequence spans 196 residues: Large ribosomal subunit protein uL18 (196 aa).

The protein belongs to the universal ribosomal protein uL18 family. Part of the 50S ribosomal subunit. Contacts the 5S and 23S rRNAs.

This is one of the proteins that bind and probably mediate the attachment of the 5S RNA into the large ribosomal subunit, where it forms part of the central protuberance. In Thermofilum pendens (strain DSM 2475 / Hrk 5), this protein is Large ribosomal subunit protein uL18.